The sequence spans 219 residues: Ribose-5-phosphate isomerase A (219 aa).

Residues 28–31, 81–84, and 94–97 contribute to the substrate site; these read SGST, DGAD, and KGGG. Glu-103 acts as the Proton acceptor in catalysis. Residue Lys-121 participates in substrate binding.

It belongs to the ribose 5-phosphate isomerase family. In terms of assembly, homodimer.

The enzyme catalyses aldehydo-D-ribose 5-phosphate = D-ribulose 5-phosphate. It participates in carbohydrate degradation; pentose phosphate pathway; D-ribose 5-phosphate from D-ribulose 5-phosphate (non-oxidative stage): step 1/1. Functionally, catalyzes the reversible conversion of ribose-5-phosphate to ribulose 5-phosphate. In Glaesserella parasuis serovar 5 (strain SH0165) (Haemophilus parasuis), this protein is Ribose-5-phosphate isomerase A.